The sequence spans 401 residues: Imidazolonepropionase (401 aa).

The Fe(3+) site is built by histidine 70 and histidine 72. Zn(2+) contacts are provided by histidine 70 and histidine 72. Positions 79, 142, and 175 each coordinate 4-imidazolone-5-propanoate. Position 142 (tyrosine 142) interacts with N-formimidoyl-L-glutamate. Residue histidine 238 coordinates Fe(3+). Position 238 (histidine 238) interacts with Zn(2+). Residue glutamine 241 participates in 4-imidazolone-5-propanoate binding. A Fe(3+)-binding site is contributed by aspartate 313. Aspartate 313 is a Zn(2+) binding site. Asparagine 315 and glycine 317 together coordinate N-formimidoyl-L-glutamate. Threonine 318 provides a ligand contact to 4-imidazolone-5-propanoate.

The protein belongs to the metallo-dependent hydrolases superfamily. HutI family. Zn(2+) is required as a cofactor. The cofactor is Fe(3+).

The protein localises to the cytoplasm. The catalysed reaction is 4-imidazolone-5-propanoate + H2O = N-formimidoyl-L-glutamate. The protein operates within amino-acid degradation; L-histidine degradation into L-glutamate; N-formimidoyl-L-glutamate from L-histidine: step 3/3. Catalyzes the hydrolytic cleavage of the carbon-nitrogen bond in imidazolone-5-propanoate to yield N-formimidoyl-L-glutamate. It is the third step in the universal histidine degradation pathway. The chain is Imidazolonepropionase from Acidiphilium cryptum (strain JF-5).